The primary structure comprises 415 residues: Translation initiation factor 2 subunit gamma (415 aa).

Residues 7–206 enclose the tr-type G domain; the sequence is QPEVNIGVVG…GIEEYIKTPY (200 aa). Residues 16 to 23 form a G1 region; the sequence is GHVDHGKT. Positions 19, 23, 44, and 46 each coordinate Mg(2+). Position 19–24 (19–24) interacts with GTP; the sequence is DHGKTT. The segment at 44-48 is G2; that stretch reads GMTIK. Zn(2+)-binding residues include Cys-59, Cys-62, Cys-74, and Cys-77. The G3 stretch occupies residues 93 to 96; that stretch reads DAPG. GTP is bound by residues 149–152 and 184–186; these read NKVD and SAL. The tract at residues 149-152 is G4; the sequence is NKVD. Residues 184-186 form a G5 region; the sequence is SAL.

Belongs to the TRAFAC class translation factor GTPase superfamily. Classic translation factor GTPase family. EIF2G subfamily. Heterotrimer composed of an alpha, a beta and a gamma chain. Mg(2+) is required as a cofactor.

It carries out the reaction GTP + H2O = GDP + phosphate + H(+). In terms of biological role, eIF-2 functions in the early steps of protein synthesis by forming a ternary complex with GTP and initiator tRNA. This chain is Translation initiation factor 2 subunit gamma, found in Saccharolobus solfataricus (strain ATCC 35092 / DSM 1617 / JCM 11322 / P2) (Sulfolobus solfataricus).